A 146-amino-acid polypeptide reads, in one-letter code: Protein disulfide-isomerase 5-1 (146 aa).

The N-terminal stretch at 1-25 (MTLGARLVAPMIILLLFIPIELVKA) is a signal peptide. The region spanning 26–133 (EVITLTPETF…LKAFVVEETE (108 aa)) is the Thioredoxin domain. Residues Cys55 and Cys58 each act as nucleophile in the active site. The cysteines at positions 55 and 58 are disulfide-linked.

Belongs to the protein disulfide isomerase family.

In terms of biological role, acts as a protein-folding catalyst that interacts with nascent polypeptides to catalyze the formation, isomerization, and reduction or oxidation of disulfide bonds. The sequence is that of Protein disulfide-isomerase 5-1 (PDIL5-1) from Arabidopsis thaliana (Mouse-ear cress).